The primary structure comprises 693 residues: Putative transmembrane protein ORF68 (693 aa).

The N-terminal stretch at 1–17 is a signal peptide; it reads MILTIILYTLLFSTCSA. The Extracellular portion of the chain corresponds to 18-666; that stretch reads QSVHTMPEAV…WLTKFGTGGG (649 aa). Positions 208-256 form a coiled coil; it reads SKAANNRMDALEDGMKNINTRVTETNLLLEKLSTEVTGALTQLENEIKM. Residues 667 to 687 traverse the membrane as a helical segment; the sequence is IAGVTIGLLLPILAIVFSCYV. The Cytoplasmic portion of the chain corresponds to 688 to 693; sequence FCKRRV.

Its subcellular location is the host membrane. The polypeptide is Putative transmembrane protein ORF68 (Magallana gigas (Pacific oyster)).